A 367-amino-acid polypeptide reads, in one-letter code: Cis-3-hydroxy-L-proline dehydratase (367 aa).

K165 (proton donor/acceptor) is an active-site residue. D193, E218, and D241 together coordinate Mg(2+). Residue K265 is the Proton donor/acceptor of the active site.

The protein belongs to the mandelate racemase/muconate lactonizing enzyme family. Requires Mg(2+) as cofactor.

The catalysed reaction is cis-3-hydroxy-L-proline = 1-pyrroline-2-carboxylate + H2O. In terms of biological role, catalyzes the dehydration of cis-3-hydroxy-L-proline (c3LHyp) to Delta(1)-pyrroline-2-carboxylate (Pyr2C). Is likely involved in a degradation pathway that converts c3LHyp to L-proline, which allows L.aggregata to grow on c3LHyp as a sole carbon source. Also catalyzes the epimerization of c3LHyp to trans-3-hydroxy-D-proline (t3DHyp), a competing reaction occurring from the same enolate anion intermediate. L-proline, t3LHyp, t4LHyp, c4DHyp and their methylated derivatives are not substrates. This is Cis-3-hydroxy-L-proline dehydratase from Roseibium aggregatum (strain ATCC 25650 / DSM 13394 / JCM 20685 / NBRC 16684 / NCIMB 2208 / IAM 12614 / B1) (Stappia aggregata).